Consider the following 98-residue polypeptide: DNA-binding protein Fis (98 aa).

Positions 74 to 93 (QTRAALMMGINRGTLRKKLK) form a DNA-binding region, H-T-H motif.

The protein belongs to the transcriptional regulatory Fis family. In terms of assembly, homodimer.

Functionally, activates ribosomal RNA transcription. Plays a direct role in upstream activation of rRNA promoters. The sequence is that of DNA-binding protein Fis from Yersinia enterocolitica serotype O:8 / biotype 1B (strain NCTC 13174 / 8081).